The following is a 316-amino-acid chain: L-lactate dehydrogenase 3 (316 aa).

NAD(+) contacts are provided by valine 16, aspartate 37, arginine 42, and tyrosine 68. Residue arginine 91 participates in substrate binding. Residues serine 104, 121–123 (ASN), and threonine 146 each bind NAD(+). 123–126 (NPVD) lines the substrate pocket. 151-154 (DSSR) lines the substrate pocket. 2 residues coordinate beta-D-fructose 1,6-bisphosphate: arginine 156 and histidine 171. Catalysis depends on histidine 178, which acts as the Proton acceptor. Threonine 233 provides a ligand contact to substrate.

The protein belongs to the LDH/MDH superfamily. LDH family. Homotetramer.

The protein resides in the cytoplasm. The enzyme catalyses (S)-lactate + NAD(+) = pyruvate + NADH + H(+). It functions in the pathway fermentation; pyruvate fermentation to lactate; (S)-lactate from pyruvate: step 1/1. Its activity is regulated as follows. Allosterically activated by fructose 1,6-bisphosphate (FBP). Catalyzes the conversion of lactate to pyruvate. The protein is L-lactate dehydrogenase 3 of Bacillus cereus (strain ATCC 10987 / NRS 248).